Consider the following 92-residue polypeptide: MKKETWRLVAHGRVQGVGYRAACADAADDLELGGWVRNRLDGTVEVMAHGTVRQLEALQAWMEQGPPAAQVTLVEVGPGEGEFAGFEFRPTI.

One can recognise an Acylphosphatase-like domain in the interval 5 to 90; that stretch reads TWRLVAHGRV…GEFAGFEFRP (86 aa). Residues Arg-20 and Asn-38 contribute to the active site.

Belongs to the acylphosphatase family.

The enzyme catalyses an acyl phosphate + H2O = a carboxylate + phosphate + H(+). The chain is Acylphosphatase (acyP) from Cupriavidus necator (strain ATCC 17699 / DSM 428 / KCTC 22496 / NCIMB 10442 / H16 / Stanier 337) (Ralstonia eutropha).